We begin with the raw amino-acid sequence, 131 residues long: Two-component response regulator ORR3 (131 aa).

One can recognise a Response regulatory domain in the interval 12 to 129; sequence HVLAVDDSIV…DVSRLCNRVI (118 aa). Asp-62 is modified (4-aspartylphosphate).

Belongs to the ARR family. Type-A subfamily. Two-component system major event consists of a His-to-Asp phosphorelay between a sensor histidine kinase (HK) and a response regulator (RR). In plants, the His-to-Asp phosphorelay involves an additional intermediate named Histidine-containing phosphotransfer protein (HPt). This multistep phosphorelay consists of a His-Asp-His-Asp sequential transfer of a phosphate group between first a His and an Asp of the HK protein, followed by the transfer to a conserved His of the HPt protein and finally the transfer to an Asp in the receiver domain of the RR protein. As to expression, expressed in roots, mature leaves and flowers, and at low levels in shoots.

Its function is as follows. Functions as a response regulator involved in His-to-Asp phosphorelay signal transduction system. Phosphorylation of the Asp residue in the receiver domain activates the ability of the protein to promote the transcription of target genes. Type-A response regulators seem to act as negative regulators of the cytokinin signaling. The polypeptide is Two-component response regulator ORR3 (Oryza sativa subsp. indica (Rice)).